The chain runs to 246 residues: Trypsin V-A (246 aa).

Residues 1–15 form the signal peptide; that stretch reads MKICIFFTLLGTVAA. A propeptide spans 16–24 (activation peptide); the sequence is FPTEDNDDR. The Peptidase S1 domain occupies 25 to 244; sequence IVGGYTCQEH…YLNWIHQTIA (220 aa). Intrachain disulfides connect Cys31-Cys160, Cys49-Cys65, Cys133-Cys233, Cys140-Cys206, Cys171-Cys185, and Cys196-Cys220. The active-site Charge relay system is His64. The Ca(2+) site is built by Glu76, Asn78, and Glu86. The active-site Charge relay system is Asp108. Ser200 (charge relay system) is an active-site residue.

This sequence belongs to the peptidase S1 family. It depends on Ca(2+) as a cofactor.

The protein localises to the secreted. Its subcellular location is the extracellular space. The catalysed reaction is Preferential cleavage: Arg-|-Xaa, Lys-|-Xaa.. This Rattus norvegicus (Rat) protein is Trypsin V-A.